A 256-amino-acid polypeptide reads, in one-letter code: MSFTLTNKNVIFVAGLGGIGLDTSKELLKRDLKNLVILDRIENPAAIAELKAINPKVTVTFYPYDVTVPIAETTKLLKTIFAQLKTVDVLINGAGILDDHQIERTIAVNYTGLVNTTTAILDFWDKRKGGPGGIICNIGSVTGFNAIYQVPVYSGTKAAVVNFTSSLAKLAPITGVTAYTVNPGITRTTLVHKFNSWLDVEPQVAEKLLAHPTQPSLACAENFVKAIELNQNGAIWKLDLGTLEAIQWTKHWDSGI.

Ser2 bears the N-acetylserine mark. NAD(+) is bound by residues Phe12–Ile41 and Asp65. Substrate is bound at residue Ser140. Residue Tyr153 is the Proton acceptor of the active site. Residue Lys157 coordinates NAD(+).

This sequence belongs to the short-chain dehydrogenases/reductases (SDR) family. Homodimer.

The catalysed reaction is a primary alcohol + NAD(+) = an aldehyde + NADH + H(+). It catalyses the reaction a secondary alcohol + NAD(+) = a ketone + NADH + H(+). Inhibited by 2,2,2-trifluoroethanol and pyrazole. This Drosophila melanogaster (Fruit fly) protein is Alcohol dehydrogenase (Adh).